Consider the following 403-residue polypeptide: S-adenosylmethionine synthase (403 aa).

His-17 lines the ATP pocket. Asp-19 contributes to the Mg(2+) binding site. Residue Glu-45 participates in K(+) binding. Positions 58 and 104 each coordinate L-methionine. The flexible loop stretch occupies residues 104-114 (QSSDIAQGVNT). ATP is bound by residues 179-181 (DGK), 250-251 (KF), Asp-259, 265-266 (RK), Ala-282, and Lys-286. Asp-259 is an L-methionine binding site. Lys-290 contributes to the L-methionine binding site.

This sequence belongs to the AdoMet synthase family. In terms of assembly, homotetramer; dimer of dimers. Requires Mg(2+) as cofactor. It depends on K(+) as a cofactor.

Its subcellular location is the cytoplasm. The catalysed reaction is L-methionine + ATP + H2O = S-adenosyl-L-methionine + phosphate + diphosphate. It participates in amino-acid biosynthesis; S-adenosyl-L-methionine biosynthesis; S-adenosyl-L-methionine from L-methionine: step 1/1. In terms of biological role, catalyzes the formation of S-adenosylmethionine (AdoMet) from methionine and ATP. The overall synthetic reaction is composed of two sequential steps, AdoMet formation and the subsequent tripolyphosphate hydrolysis which occurs prior to release of AdoMet from the enzyme. In Mycobacterium leprae (strain Br4923), this protein is S-adenosylmethionine synthase.